The primary structure comprises 218 residues: Redox-sensing transcriptional repressor Rex (218 aa).

The segment at residues 25–64 (WYLSYVQLLHADGCESVSSTRIARAVGVDASLVAKDLSYV) is a DNA-binding region (H-T-H motif). Position 99 to 104 (99 to 104 (GVGSLG)) interacts with NAD(+).

It belongs to the transcriptional regulatory Rex family. In terms of assembly, homodimer.

The protein localises to the cytoplasm. In terms of biological role, modulates transcription in response to changes in cellular NADH/NAD(+) redox state. The protein is Redox-sensing transcriptional repressor Rex of Porphyromonas gingivalis (strain ATCC BAA-308 / W83).